A 543-amino-acid polypeptide reads, in one-letter code: Ribonuclease Y (543 aa).

Residues isoleucine 4–tyrosine 24 form a helical membrane-spanning segment. The 64-residue stretch at threonine 233–leucine 296 folds into the KH domain. Residues valine 359–alanine 452 enclose the HD domain.

The protein belongs to the RNase Y family.

Its subcellular location is the cell membrane. Functionally, endoribonuclease that initiates mRNA decay. This chain is Ribonuclease Y, found in Lactobacillus helveticus (strain DPC 4571).